Reading from the N-terminus, the 1272-residue chain is AF4/FMR2 family member 2 (1272 aa).

Disordered stretches follow at residues 151–190 (SNRK…DPPQ), 204–231 (PQIG…DTFK), 372–401 (TLQK…EDDL), 422–497 (KAKP…QLDK), 557–694 (IREK…ETLQ), 715–743 (TLST…PAMQ), and 772–899 (PGQN…QDKN). A compositionally biased stretch (basic and acidic residues) spans 155–164 (SKSEWPRDSH). Positions 165-179 (NTSPAQASQTSSQPN) are enriched in low complexity. The span at 180 to 189 (KMQTSTQDPP) shows a compositional bias: polar residues. A compositionally biased stretch (low complexity) spans 210 to 227 (EKSNPSSKEENNPNSGGE). Positions 374 to 384 (QKWSDPSSRAS) are enriched in polar residues. Residues 387-396 (MLEDDLKLSS) are compositionally biased toward basic and acidic residues. At serine 395 the chain carries Phosphoserine. The segment covering 436 to 450 (TPQSTPATQTNVGSG) has biased composition (polar residues). Threonine 482 is modified (phosphothreonine). A compositionally biased stretch (polar residues) spans 580–590 (STSVDTVSQRT). Residues 620–633 (PKEKGSVELPDPPR) are compositionally biased toward basic and acidic residues. Residues 634–644 (SRNKATAHKPV) show a composition bias toward basic residues. Positions 715–734 (TLSTLTNGNSNNLSTSNEET) are enriched in low complexity. Residues 815–831 (PAETAEKIPEKKQRLED) are compositionally biased toward basic and acidic residues. Pro residues predominate over residues 841 to 850 (CISPAPPHKP). The span at 887-899 (VSGNNGHFGQDKN) shows a compositional bias: polar residues.

The protein belongs to the AF4 family. As to expression, highly expressed in the hippocampus, the piriform cortex, Purkinje cells and the cingulate gyrus.

The protein localises to the nucleus speckle. RNA-binding protein. Might be involved in alternative splicing regulation through an interaction with G-quartet RNA structure. The chain is AF4/FMR2 family member 2 from Mus musculus (Mouse).